Here is a 363-residue protein sequence, read N- to C-terminus: Anhydro-N-acetylmuramic acid kinase (363 aa).

10–17 (GTSLDGLD) provides a ligand contact to ATP.

Belongs to the anhydro-N-acetylmuramic acid kinase family.

The catalysed reaction is 1,6-anhydro-N-acetyl-beta-muramate + ATP + H2O = N-acetyl-D-muramate 6-phosphate + ADP + H(+). Its pathway is amino-sugar metabolism; 1,6-anhydro-N-acetylmuramate degradation. The protein operates within cell wall biogenesis; peptidoglycan recycling. Functionally, catalyzes the specific phosphorylation of 1,6-anhydro-N-acetylmuramic acid (anhMurNAc) with the simultaneous cleavage of the 1,6-anhydro ring, generating MurNAc-6-P. Is required for the utilization of anhMurNAc either imported from the medium or derived from its own cell wall murein, and thus plays a role in cell wall recycling. Contributes to intrinsic fosfomycin resistance in P.putida. The polypeptide is Anhydro-N-acetylmuramic acid kinase (Pseudomonas putida (strain ATCC 47054 / DSM 6125 / CFBP 8728 / NCIMB 11950 / KT2440)).